Consider the following 392-residue polypeptide: Formate-dependent phosphoribosylglycinamide formyltransferase (392 aa).

N(1)-(5-phospho-beta-D-ribosyl)glycinamide is bound by residues 22-23 (EL) and Glu-82. Residues Arg-114, Lys-155, 160 to 165 (SSGHGQ), 195 to 198 (EGFI), and Glu-203 each bind ATP. Positions 119–307 (RLAAEELGLK…QFALHARAIL (189 aa)) constitute an ATP-grasp domain. Mg(2+) is bound by residues Glu-266 and Glu-278. N(1)-(5-phospho-beta-D-ribosyl)glycinamide is bound by residues Asp-285, Lys-355, and 362–363 (RR).

This sequence belongs to the PurK/PurT family. In terms of assembly, homodimer.

Its subcellular location is the cell inner membrane. The catalysed reaction is N(1)-(5-phospho-beta-D-ribosyl)glycinamide + formate + ATP = N(2)-formyl-N(1)-(5-phospho-beta-D-ribosyl)glycinamide + ADP + phosphate + H(+). It functions in the pathway purine metabolism; IMP biosynthesis via de novo pathway; N(2)-formyl-N(1)-(5-phospho-D-ribosyl)glycinamide from N(1)-(5-phospho-D-ribosyl)glycinamide (formate route): step 1/1. Functionally, involved in the de novo purine biosynthesis. Catalyzes the transfer of formate to 5-phospho-ribosyl-glycinamide (GAR), producing 5-phospho-ribosyl-N-formylglycinamide (FGAR). Formate is provided by PurU via hydrolysis of 10-formyl-tetrahydrofolate. The chain is Formate-dependent phosphoribosylglycinamide formyltransferase from Mannheimia haemolytica (Pasteurella haemolytica).